The primary structure comprises 406 residues: Renin (406 aa).

Residues 1–23 (MDGWRRMPRWGLLLLLWGSCTFG) form the signal peptide. Positions 24–66 (LPTDTTTFKRIFLKRMPSIRESLKERGVDMARLGPEWSQPMKR) are cleaved as a propeptide — activation peptide. Asparagine 71 is a glycosylation site (N-linked (GlcNAc...) asparagine). Residues 86–403 (YYGEIGIGTP…DRRNNRIGFA (318 aa)) enclose the Peptidase A1 domain. Residue aspartate 104 is part of the active site. Residues cysteine 117 and cysteine 124 are joined by a disulfide bond. Residue asparagine 141 is glycosylated (N-linked (GlcNAc...) asparagine). Cysteines 283 and 287 form a disulfide. The active site involves aspartate 292. Cysteine 325 and cysteine 362 are disulfide-bonded.

This sequence belongs to the peptidase A1 family. In terms of assembly, interacts with ATP6AP2.

It localises to the secreted. The protein resides in the membrane. It carries out the reaction Cleavage of Leu-|-Xaa bond in angiotensinogen to generate angiotensin I.. Interaction with ATP6AP2 results in a 5-fold increased efficiency in angiotensinogen processing. Renin is a highly specific endopeptidase, whose only known function is to generate angiotensin I from angiotensinogen in the plasma, initiating a cascade of reactions that produce an elevation of blood pressure and increased sodium retention by the kidney. The protein is Renin (REN) of Homo sapiens (Human).